Reading from the N-terminus, the 301-residue chain is Homoserine O-acetyltransferase (301 aa).

The active-site Acyl-thioester intermediate is the Cys142. Positions 163 and 192 each coordinate substrate. His235 (proton acceptor) is an active-site residue. The active site involves Glu237. Arg249 serves as a coordination point for substrate.

Belongs to the MetA family.

The protein resides in the cytoplasm. The enzyme catalyses L-homoserine + acetyl-CoA = O-acetyl-L-homoserine + CoA. It functions in the pathway amino-acid biosynthesis; L-methionine biosynthesis via de novo pathway; O-acetyl-L-homoserine from L-homoserine: step 1/1. Functionally, transfers an acetyl group from acetyl-CoA to L-homoserine, forming acetyl-L-homoserine. This is Homoserine O-acetyltransferase from Bacillus cereus (strain ATCC 14579 / DSM 31 / CCUG 7414 / JCM 2152 / NBRC 15305 / NCIMB 9373 / NCTC 2599 / NRRL B-3711).